Consider the following 107-residue polypeptide: MGRKKGLPEFEESAPDGFDPENPYKDPVAMVEMREHIVREKWIHIEKAKILREKVKWCYRVEGVNHYQKCRHLVQQYLDATRGVGWGKDHRPISLHGPKPVAVEEAE.

The disordered stretch occupies residues 1–23; the sequence is MGRKKGLPEFEESAPDGFDPENP.

It belongs to the complex I NDUFB10 subunit family. As to quaternary structure, complex I is composed of at least 49 different subunits.

The protein resides in the mitochondrion inner membrane. Its function is as follows. Accessory subunit of the mitochondrial membrane respiratory chain NADH dehydrogenase (Complex I), that is believed not to be involved in catalysis. Complex I functions in the transfer of electrons from NADH to the respiratory chain. The immediate electron acceptor for the enzyme is believed to be ubiquinone. The protein is NADH dehydrogenase [ubiquinone] 1 beta subcomplex subunit 10-A of Arabidopsis thaliana (Mouse-ear cress).